Reading from the N-terminus, the 396-residue chain is Ribosomal RNA large subunit methyltransferase I (396 aa).

Positions 2–79 constitute a PUA domain; it reads AVRIKLKPGR…REEEIDREFF (78 aa).

Belongs to the methyltransferase superfamily. RlmI family.

It is found in the cytoplasm. The catalysed reaction is cytidine(1962) in 23S rRNA + S-adenosyl-L-methionine = 5-methylcytidine(1962) in 23S rRNA + S-adenosyl-L-homocysteine + H(+). Specifically methylates the cytosine at position 1962 (m5C1962) of 23S rRNA. The sequence is that of Ribosomal RNA large subunit methyltransferase I from Shewanella sp. (strain MR-4).